Consider the following 328-residue polypeptide: L-lactate dehydrogenase (328 aa).

NAD(+)-binding positions include Val-18, Glu-39, Lys-46, Tyr-71, and 85-86 (GA). 2 residues coordinate substrate: Gln-88 and Arg-94. Residues Ser-107, 124–126 (AAN), and Ser-149 contribute to the NAD(+) site. Residue 126–129 (NPVD) participates in substrate binding. 154-157 (DSAR) lines the substrate pocket. The beta-D-fructose 1,6-bisphosphate site is built by Arg-159 and His-174. His-181 acts as the Proton acceptor in catalysis. Residue Tyr-226 is modified to Phosphotyrosine. Thr-235 contributes to the substrate binding site.

This sequence belongs to the LDH/MDH superfamily. LDH family. Homotetramer.

The protein localises to the cytoplasm. The catalysed reaction is (S)-lactate + NAD(+) = pyruvate + NADH + H(+). The protein operates within fermentation; pyruvate fermentation to lactate; (S)-lactate from pyruvate: step 1/1. Allosterically activated by fructose 1,6-bisphosphate (FBP). Functionally, catalyzes the conversion of lactate to pyruvate. In Streptococcus gordonii (strain Challis / ATCC 35105 / BCRC 15272 / CH1 / DL1 / V288), this protein is L-lactate dehydrogenase.